We begin with the raw amino-acid sequence, 249 residues long: DNA repair protein RecO (249 aa).

Belongs to the RecO family.

Involved in DNA repair and RecF pathway recombination. The chain is DNA repair protein RecO from Sinorhizobium medicae (strain WSM419) (Ensifer medicae).